A 526-amino-acid polypeptide reads, in one-letter code: Calcium-dependent protein kinase 28 (526 aa).

The tract at residues 1–37 (MQPDPQPHGRGREKAAGAGPRLPPPVTAPSVGRPASV) is disordered. The Protein kinase domain maps to 49 to 307 (YRIGKKLGQG…AHEVLCHPWI (259 aa)). ATP is bound by residues 55–63 (LGQGQFGTT) and lysine 78. The Proton acceptor role is filled by aspartate 173. The tract at residues 313–343 (APDKPIDSAVLSRLKHFSAMNKLKKMALRVI) is autoinhibitory domain. EF-hand domains lie at 350–385 (EEIG…VGSD), 386–421 (LMEP…MNKL), 422–457 (EREE…FGLS), and 460–491 (HLED…GNAG). Ca(2+)-binding residues include aspartate 363, aspartate 365, serine 367, threonine 369, glutamate 374, aspartate 399, aspartate 401, serine 403, threonine 405, glutamate 410, aspartate 435, aspartate 437, serine 439, glutamate 446, aspartate 469, asparagine 471, aspartate 473, glutamine 475, and glutamate 480.

It belongs to the protein kinase superfamily. Ser/Thr protein kinase family. CDPK subfamily.

It carries out the reaction L-seryl-[protein] + ATP = O-phospho-L-seryl-[protein] + ADP + H(+). The enzyme catalyses L-threonyl-[protein] + ATP = O-phospho-L-threonyl-[protein] + ADP + H(+). With respect to regulation, activated by calcium. Autophosphorylation may play an important role in the regulation of the kinase activity. May play a role in signal transduction pathways that involve calcium as a second messenger. The protein is Calcium-dependent protein kinase 28 of Oryza sativa subsp. japonica (Rice).